We begin with the raw amino-acid sequence, 400 residues long: DNA polymerase IV (400 aa).

A UmuC domain is found at 5 to 187 (IFLVDMNAFF…LPVEFMNGIG (183 aa)). The Mg(2+) site is built by Asp-9 and Asp-105. Residue Glu-106 is part of the active site.

This sequence belongs to the DNA polymerase type-Y family. In terms of assembly, monomer. The cofactor is Mg(2+).

Its subcellular location is the cytoplasm. It carries out the reaction DNA(n) + a 2'-deoxyribonucleoside 5'-triphosphate = DNA(n+1) + diphosphate. Poorly processive, error-prone DNA polymerase involved in untargeted mutagenesis. Copies undamaged DNA at stalled replication forks, which arise in vivo from mismatched or misaligned primer ends. These misaligned primers can be extended by PolIV. Exhibits no 3'-5' exonuclease (proofreading) activity. May be involved in translesional synthesis, in conjunction with the beta clamp from PolIII. This is DNA polymerase IV from Clostridium kluyveri (strain ATCC 8527 / DSM 555 / NBRC 12016 / NCIMB 10680 / K1).